We begin with the raw amino-acid sequence, 205 residues long: Protein TGAM_1450 (205 aa).

The region spanning 7-201 is the AMMECR1 domain; sequence EWGEFLVRLA…EEYPRGPVRR (195 aa).

The chain is Protein TGAM_1450 from Thermococcus gammatolerans (strain DSM 15229 / JCM 11827 / EJ3).